The following is a 195-amino-acid chain: MLKIGLTGGIGSGKSTVADLLSSEGFLIIDADQIAREIVEPGQPALAELVEAFGPEIIKEDGSLDRQGLAAKAFVDAEHTALLNSITHPRIAEETARRFAEAEANGTKVAIYDMPLLVDKGLDRGMDLVLVVDVNVEERVRRLVEKRGLGEKDVRRRIDSQVPDEVRLKAADVVIDNNGSLEDLKANMKNVIAEI.

Positions 3 to 195 constitute a DPCK domain; sequence KIGLTGGIGS…ANMKNVIAEI (193 aa). Position 11–16 (11–16) interacts with ATP; sequence GSGKST.

This sequence belongs to the CoaE family.

It localises to the cytoplasm. It carries out the reaction 3'-dephospho-CoA + ATP = ADP + CoA + H(+). It participates in cofactor biosynthesis; coenzyme A biosynthesis; CoA from (R)-pantothenate: step 5/5. Its function is as follows. Catalyzes the phosphorylation of the 3'-hydroxyl group of dephosphocoenzyme A to form coenzyme A. This Corynebacterium glutamicum (Brevibacterium saccharolyticum) protein is Dephospho-CoA kinase.